The sequence spans 716 residues: DEAD-box ATP-dependent RNA helicase 31 (716 aa).

Residues 99 to 188 form a disordered region; that stretch reads GILKSDDEDE…LRLEDESSDE (90 aa). Basic and acidic residues predominate over residues 110–121; the sequence is DRSRGRNQEKRG. Positions 144-153 are enriched in polar residues; sequence SRIQGKSSEA. A compositionally biased stretch (basic and acidic residues) spans 155–188; the sequence is FRGRKETSFSRDREDEKGLRKREDLRLEDESSDE. The Q motif signature appears at 248 to 276; the sequence is TRFDHYPLSPLSLKAIKDAGYETMTVVQE. The Helicase ATP-binding domain occupies 279-462; that stretch reads LPIILKGKDV…LVALRRDHEF (184 aa). 292-299 is an ATP binding site; it reads AKTGTGKT. The DEAD box signature appears at 410–413; the sequence is DEAD. The region spanning 497-643 is the Helicase C-terminal domain; that stretch reads LREHIMGNVD…IDPETVKKVQ (147 aa).

Belongs to the DEAD box helicase family.

It catalyses the reaction ATP + H2O = ADP + phosphate + H(+). The sequence is that of DEAD-box ATP-dependent RNA helicase 31 (RH31) from Arabidopsis thaliana (Mouse-ear cress).